We begin with the raw amino-acid sequence, 322 residues long: tRNA U34 carboxymethyltransferase (322 aa).

Carboxy-S-adenosyl-L-methionine contacts are provided by residues Lys-90, Trp-104, Lys-109, Gly-129, 151–153 (DPT), 179–180 (ME), Met-195, Tyr-199, and Arg-314.

This sequence belongs to the class I-like SAM-binding methyltransferase superfamily. CmoB family. Homotetramer.

It carries out the reaction carboxy-S-adenosyl-L-methionine + 5-hydroxyuridine(34) in tRNA = 5-carboxymethoxyuridine(34) in tRNA + S-adenosyl-L-homocysteine + H(+). In terms of biological role, catalyzes carboxymethyl transfer from carboxy-S-adenosyl-L-methionine (Cx-SAM) to 5-hydroxyuridine (ho5U) to form 5-carboxymethoxyuridine (cmo5U) at position 34 in tRNAs. The sequence is that of tRNA U34 carboxymethyltransferase from Alcanivorax borkumensis (strain ATCC 700651 / DSM 11573 / NCIMB 13689 / SK2).